The primary structure comprises 401 residues: Renin-2 (401 aa).

The first 25 residues, 1–25, serve as a signal peptide directing secretion; the sequence is MDRRRMPLWALLLLWSPCTFSLPTG. Residues 26-63 constitute a propeptide, activation peptide; the sequence is TTFERIPLKKMPSVREILEERGVDMTRLSAEWDVFTKR. The Peptidase A1 domain maps to 83-398; that stretch reads YYGEIGIGTP…DRHNNRIGFA (316 aa). Aspartate 101 is an active-site residue. 2 cysteine pairs are disulfide-bonded: cysteine 114–cysteine 121 and cysteine 277–cysteine 281. Aspartate 286 is a catalytic residue. A disulfide bridge links cysteine 320 with cysteine 357.

It belongs to the peptidase A1 family. Dimer of a heavy chain and a light chain joined by a disulfide bond. Submandibular gland.

The protein resides in the secreted. It catalyses the reaction Cleavage of Leu-|-Xaa bond in angiotensinogen to generate angiotensin I.. Renin is a highly specific endopeptidase, related to pepsin, whose only known function is to generate angiotensin I from angiotensinogen in the plasma, initiating a cascade of reactions that produce an elevation of blood pressure and increased sodium retention by the kidney. The polypeptide is Renin-2 (Mus musculus (Mouse)).